A 521-amino-acid chain; its full sequence is Transcription activator of gluconeogenesis SS1G_02293 (521 aa).

Residues 1 to 12 (MSGETEIDDPEV) are compositionally biased toward acidic residues. The interval 1 to 75 (MSGETEIDDP…KFDPKDPLRP (75 aa)) is disordered. Basic and acidic residues-rich tracts occupy residues 21–49 (YSDHEQELDVVGKEDDNQEMAEQKVRPDG) and 65–74 (PKFDPKDPLR). The zn(2)-C6 fungal-type DNA-binding region spans 84 to 112 (CFACQRAHLTCGDERPCQRCIKRGLADAC). Disordered stretches follow at residues 273-308 (SGSAETPPQDSSAGMPQNVGDLGYNNNPAFNNNPPF), 322-358 (VAPPGAHRPAKRQDTKSGPSGKLGPSSALGKRNRDPS), and 478-501 (NTGNSGASSSGSSGRGSFTTPRMR). Over residues 275–287 (SAETPPQDSSAGM) the composition is skewed to polar residues. Composition is skewed to low complexity over residues 297–308 (NNNPAFNNNPPF), 337–351 (KSGPSGKLGPSSALG), and 480–494 (GNSGASSSGSSGRGS). Residues 426-497 (TLFEYEDFML…GSSGRGSFTT (72 aa)) enclose the PAS domain.

It belongs to the ERT1/acuK family.

It localises to the nucleus. Transcription factor which regulates nonfermentable carbon utilization. Activator of gluconeogenetic genes. In Sclerotinia sclerotiorum (strain ATCC 18683 / 1980 / Ss-1) (White mold), this protein is Transcription activator of gluconeogenesis SS1G_02293.